A 715-amino-acid polypeptide reads, in one-letter code: Lanosterol synthase erg7B (715 aa).

The stretch at 111-153 (AIEIKNYLMARANPVDGGWGLHSEGDSSVFGTSLNYTVLRLLG) is one PFTB 1 repeat. Residue aspartate 445 is the Proton donor of the active site. PFTB repeat units lie at residues 550–590 (IQRG…RSAG) and 599–640 (VRRG…VVQT).

The protein belongs to the terpene cyclase/mutase family.

The protein resides in the lipid droplet. It is found in the endoplasmic reticulum membrane. It catalyses the reaction (S)-2,3-epoxysqualene = lanosterol. Its pathway is steroid metabolism; ergosterol biosynthesis. In terms of biological role, lanosterol synthase; part of the third module of ergosterol biosynthesis pathway that includes the late steps of the pathway. ERG7A and ERG7B catalyze the cyclization of (S)-2,3 oxidosqualene to lanosterol, a reaction that forms the sterol core. The third module or late pathway involves the ergosterol synthesis itself through consecutive reactions that mainly occur in the endoplasmic reticulum (ER) membrane. Firstly, the squalene synthase erg9 catalyzes the condensation of 2 farnesyl pyrophosphate moieties to form squalene, which is the precursor of all steroids. Squalene synthase is crucial for balancing the incorporation of farnesyl diphosphate (FPP) into sterol and nonsterol isoprene synthesis. Secondly, squalene is converted into lanosterol by the consecutive action of the squalene epoxidase erg1 and the lanosterol synthase erg7. Then, the delta(24)-sterol C-methyltransferase erg6 methylates lanosterol at C-24 to produce eburicol. Eburicol is the substrate of the sterol 14-alpha demethylase encoded by cyp51A and cyp51B, to yield 4,4,24-trimethyl ergosta-8,14,24(28)-trienol. The C-14 reductase erg24 then reduces the C14=C15 double bond which leads to 4,4-dimethylfecosterol. A sequence of further demethylations at C-4, involving the C-4 demethylation complex containing the C-4 methylsterol oxidases erg25A or erg25B, the sterol-4-alpha-carboxylate 3-dehydrogenase erg26 and the 3-keto-steroid reductase erg27, leads to the production of fecosterol via 4-methylfecosterol. The C-8 sterol isomerase erg2 then catalyzes the reaction which results in unsaturation at C-7 in the B ring of sterols and thus converts fecosterol to episterol. The sterol-C5-desaturase erg3B then catalyzes the introduction of a C-5 double bond in the B ring to produce 5-dehydroepisterol. The 2 other sterol-C5-desaturases, erg3A and erg3C, seem to be less important in ergosterol biosynthesis. The C-22 sterol desaturase erg5 further converts 5-dehydroepisterol into ergosta-5,7,22,24(28)-tetraen-3beta-ol by forming the C-22(23) double bond in the sterol side chain. Finally, ergosta-5,7,22,24(28)-tetraen-3beta-ol is substrate of the C-24(28) sterol reductases erg4A and erg4B to produce ergosterol. Possible alternative sterol biosynthetic pathways might exist from fecosterol to ergosterol, depending on the activities of the erg3 isoforms. This chain is Lanosterol synthase erg7B, found in Aspergillus fumigatus (strain ATCC MYA-4609 / CBS 101355 / FGSC A1100 / Af293) (Neosartorya fumigata).